A 160-amino-acid chain; its full sequence is UPF0178 protein BB1267 (160 aa).

Belongs to the UPF0178 family.

In Bordetella bronchiseptica (strain ATCC BAA-588 / NCTC 13252 / RB50) (Alcaligenes bronchisepticus), this protein is UPF0178 protein BB1267.